Reading from the N-terminus, the 436-residue chain is tRNA(Ile)-lysidine synthase (436 aa).

Position 27–32 (27–32) interacts with ATP; the sequence is SGGVDS.

This sequence belongs to the tRNA(Ile)-lysidine synthase family.

It is found in the cytoplasm. It catalyses the reaction cytidine(34) in tRNA(Ile2) + L-lysine + ATP = lysidine(34) in tRNA(Ile2) + AMP + diphosphate + H(+). Its function is as follows. Ligates lysine onto the cytidine present at position 34 of the AUA codon-specific tRNA(Ile) that contains the anticodon CAU, in an ATP-dependent manner. Cytidine is converted to lysidine, thus changing the amino acid specificity of the tRNA from methionine to isoleucine. This is tRNA(Ile)-lysidine synthase from Vibrio vulnificus (strain YJ016).